The sequence spans 331 residues: Ferrochelatase (331 aa).

H187 and E286 together coordinate Fe cation.

Belongs to the ferrochelatase family.

The protein resides in the cytoplasm. The enzyme catalyses heme b + 2 H(+) = protoporphyrin IX + Fe(2+). Its pathway is porphyrin-containing compound metabolism; protoheme biosynthesis; protoheme from protoporphyrin-IX: step 1/1. In terms of biological role, catalyzes the ferrous insertion into protoporphyrin IX. This Legionella pneumophila (strain Corby) protein is Ferrochelatase.